A 246-amino-acid polypeptide reads, in one-letter code: MKPSDVRSKAFAMPLTSPAFPMGPYRFVDREFLIITYRTDPDRLREIVPEPLQVTEPLVHYEFIRMADSTGFGDYTESGQVIPVEYEGQPGGYTLAMYLDDHPPIAGGRELWGFPKKLASPTLHVNTDHILGTLDYGKVRVATGTMGYKHKELDIDEQTKRLAGPNFLLKIIPHVDGTARVCELVRYYMQDIKMKGAWTGPASLELAPHALAPVADLPVLEIVEARHLVADLTLGLGEVVYDYLAQ.

Lys-116 serves as the catalytic Schiff-base intermediate with acetoacetate.

It belongs to the ADC family.

It carries out the reaction acetoacetate + H(+) = acetone + CO2. Its function is as follows. Catalyzes the conversion of acetoacetate to acetone and carbon dioxide. This chain is Acetoacetate decarboxylase, found in Burkholderia cenocepacia (strain HI2424).